We begin with the raw amino-acid sequence, 568 residues long: Keratin, type I cytoskeletal 10 (568 aa).

The segment covering 1-15 has biased composition (low complexity); that stretch reads MSVRYSSSKQYSSSR. The interval 1–31 is disordered; it reads MSVRYSSSKQYSSSRSGGGGGGGGGSSFRIS. Residues 1-135 form a head region; sequence MSVRYSSSKQ…GGDGGLLSGN (135 aa). Phosphoserine occurs at positions 14, 16, 36, 47, 50, and 160. Gly residues predominate over residues 16-26; sequence SGGGGGGGGGS. The interval 136–171 is coil 1A; sequence EKVTMQNLNDRLASYLDKVRALEESNYELEGKIKEW. In terms of domain architecture, IF rod spans 136-450; that stretch reads EKVTMQNLND…SLLEGEGSSG (315 aa). Residues 172–192 are linker 1; it reads YEKHGNSSQRAPRDYSKYYQT. The segment at 193–284 is coil 1B; it reads IEDLKNQILN…KNHEEEMRDL (92 aa). Positions 285–307 are linker 12; sequence QNVSTGDVNVEMNAAPGVDLTEL. Residues 308–446 form a coil 2 region; it reads LNNMRNQYEQ…QTYRSLLEGE (139 aa). The segment at 447-568 is tail; it reads GSSGGGGYGG…GESSSKGPRY (122 aa). The span at 485–546 shows a compositional bias: gly residues; that stretch reads GGGSSGGGGH…GGGYGGGSSS (62 aa). The interval 485–568 is disordered; it reads GGGSSGGGGH…GESSSKGPRY (84 aa). A compositionally biased stretch (low complexity) spans 547–568; that stretch reads SGGHKSSSSGSVGESSSKGPRY.

This sequence belongs to the intermediate filament family. In terms of assembly, heterotetramer of two type I and two type II keratins. Heterodimer with KRT1. Two heterodimers of KRT1 and KRT10 form a heterotetramer. The KRT10 subunit in the heterotetramer is probably disulfide-linked. Expressed in skin.

The protein resides in the secreted. It localises to the extracellular space. Its subcellular location is the cell surface. The protein localises to the cytoplasm. In terms of biological role, plays a role in the establishment of the epidermal barrier on plantar skin. Involved in the maintenance of cell layer development and keratin filament bundles in suprabasal cells of the epithelium. This chain is Keratin, type I cytoskeletal 10, found in Canis lupus familiaris (Dog).